Here is a 327-residue protein sequence, read N- to C-terminus: Thioredoxin reductase (327 aa).

Residues 10-13, 39-40, glutamine 44, asparagine 53, valine 86, cysteine 143, aspartate 286, and 293-295 each bind FAD; these read SGPA, IA, and RQA. Cysteines 140 and 143 form a disulfide.

The protein belongs to the class-II pyridine nucleotide-disulfide oxidoreductase family. As to quaternary structure, homodimer. Requires FAD as cofactor.

It localises to the cytoplasm. The enzyme catalyses [thioredoxin]-dithiol + NADP(+) = [thioredoxin]-disulfide + NADPH + H(+). Its function is as follows. Component of the thioredoxin-thioredoxin reductase system which may be involved in biosynthesis of penicillins and cephalosporins and may be important in determining the thiol-disulfide redox balance. This Pneumocystis jirovecii (Human pneumocystis pneumonia agent) protein is Thioredoxin reductase (TRR1).